The following is a 3425-amino-acid chain: Genome polyprotein (3425 aa).

The interval 3–16 (NKKPGRPGSGRVVN) is interaction with host EXOC1. Positions 38 to 73 (VLRGAGPIRFVLALLTFFKFTALRPTIGMLKRWKLV) are hydrophobic; homodimerization of capsid protein C. A propeptide spans 105 to 120 (GGSCSWIIMLLPIVAG) (ER anchor for the capsid protein C, removed in mature form by serine protease NS3). Residues 105-125 (GGSCSWIIMLLPIVAGLKLGN) traverse the membrane as a helical segment. N-linked (GlcNAc...) asparagine; by host glycosylation is present at N135. The next 2 helical transmembrane spans lie at 247-267 (WALR…NLGT) and 273-293 (IIFT…CLGM). Intrachain disulfides connect C290-C317, C347-C403, C361-C392, C379-C408, C477-C575, and C592-C623. The segment at 385 to 398 (DRGWGNGCGLFGKG) is fusion peptide. 2 consecutive transmembrane segments (helical) span residues 740 to 760 (LFGG…LWMG) and 768 to 788 (ISMT…NVNA). A disulfide bridge links C792 with C803. N-linked (GlcNAc...) asparagine; by host glycosylation is found at N918, N963, and N995. 4 disulfides stabilise this stretch: C967–C1011, C1068–C1117, C1079–C1100, and C1101–C1104. The next 7 helical transmembrane spans lie at 1138–1158 (VMAF…VMIV), 1169–1189 (TAPI…FGGI), 1214–1234 (IVHL…IGFL), 1290–1310 (FALP…IDVV), 1337–1357 (MLLG…FAGL), 1369–1389 (WPVS…GGIA), and 1395–1415 (SMAI…VTGF). The segment at 1421 to 1460 (LEKASDISWSEEARVTGASQRFDVEIDQDGNMRLLNDPGV) is interacts with and activates NS3 protease. The region spanning 1499–1676 (GGVIWDVPAP…EKKEEEVPQV (178 aa)) is the Peptidase S7 domain. Catalysis depends on charge relay system; for serine protease NS3 activity residues H1549, D1573, and S1633. The region spanning 1679–1835 (ENMLRKRQLT…DSNSPITDIE (157 aa)) is the Helicase ATP-binding domain. The interval 1683-1686 (RKRQ) is important for RNA-binding. ATP is bound at residue 1692 to 1699 (LHPGSGKT). Residues 1783–1786 (DEAH) carry the DEAH box motif. In terms of domain architecture, Helicase C-terminal spans 1845 to 2011 (SGYEWITDFQ…GLVAQLYGPE (167 aa)). Residues 2162–2166 (EELPE) are regulates the ATPase activity of NS3 helicase. A run of 8 helical transmembrane segments spans residues 2169–2189 (ETFL…LFFV), 2194–2214 (LGKT…LWIA), 2216–2236 (VPAQ…IVLI), 2252–2272 (VFMI…MGWL), 2306–2326 (AWAA…HLII), 2334–2354 (LMAM…MPFV), 2371–2391 (FTMT…AFLV), and 2441–2461 (CVLV…LTLT). Residues 2521–2786 (GGGTGRTLGE…DVDLGSGTRA (266 aa)) enclose the mRNA cap 0-1 NS5-type MT domain. S2576 serves as a coordination point for S-adenosyl-L-methionine. The residue at position 2576 (S2576) is a Phosphoserine. K2581 (for 2'-O-MTase activity) is an active-site residue. S-adenosyl-L-methionine-binding residues include G2606, W2607, T2624, K2625, and V2652. D2666 acts as the For 2'-O-MTase activity in catalysis. An S-adenosyl-L-methionine-binding site is contributed by I2667. Residues K2702 and E2738 each act as for 2'-O-MTase activity in the active site. S-adenosyl-L-methionine is bound at residue Y2740. Residues E2960, H2964, C2969, and C2972 each coordinate Zn(2+). The RdRp catalytic domain maps to 3050 to 3202 (GLMYADDTAG…KPADDRFATA (153 aa)). The Zn(2+) site is built by H3237, C3253, and C3372. The PDZ-binding motif lies at 3423-3425 (GVL).

The protein in the N-terminal section; belongs to the class I-like SAM-binding methyltransferase superfamily. mRNA cap 0-1 NS5-type methyltransferase family. Homodimer. As to quaternary structure, forms heterodimers with envelope protein E in the endoplasmic reticulum and Golgi. In terms of assembly, homodimer; in the endoplasmic reticulum and Golgi. Interacts with protein prM. Interacts with non-structural protein 1. Homodimer; Homohexamer when secreted. Interacts with envelope protein E. NS1 interacts with NS4B. Interacts with host MAVS (via C-terminus); this interaction blocks the interaction of MAVS with RIGI or IFIH1/MDA5. As to quaternary structure, interacts (via N-terminus) with serine protease NS3. In terms of assembly, forms a heterodimer with serine protease NS3. May form homooligomers. Forms a heterodimer with NS2B. Interacts with non-structural protein 2A (via N-terminus). Interacts with NS4B. Interacts with unphosphorylated RNA-directed RNA polymerase NS5; this interaction stimulates RNA-directed RNA polymerase NS5 guanylyltransferase activity. As to quaternary structure, interacts with serine protease NS3. In terms of assembly, homodimer. Specific enzymatic cleavages in vivo yield mature proteins. Cleavages in the lumen of endoplasmic reticulum are performed by host signal peptidase, whereas cleavages in the cytoplasmic side are performed by serine protease NS3. Signal cleavage at the 2K-4B site requires a prior NS3 protease-mediated cleavage at the 4A-2K site. Both NS2A and NS2B proteins are required in cis for NS2A/2B proteolytic processing. Post-translationally, cleaved in post-Golgi vesicles by a host furin, releasing the mature small envelope protein M, and peptide pr. This cleavage is incomplete as up to 30% of viral particles still carry uncleaved prM. In terms of processing, N-glycosylated. N-glycosylated. The excreted form is glycosylated and this is required for efficient secretion of the protein from infected cells. Post-translationally, phosphorylated on serines residues. This phosphorylation may trigger NS5 nuclear localization.

It is found in the virion. The protein resides in the host nucleus. Its subcellular location is the host cytoplasm. It localises to the host perinuclear region. The protein localises to the secreted. It is found in the virion membrane. The protein resides in the host endoplasmic reticulum membrane. It carries out the reaction Selective hydrolysis of -Xaa-Xaa-|-Yaa- bonds in which each of the Xaa can be either Arg or Lys and Yaa can be either Ser or Ala.. The catalysed reaction is RNA(n) + a ribonucleoside 5'-triphosphate = RNA(n+1) + diphosphate. It catalyses the reaction a ribonucleoside 5'-triphosphate + H2O = a ribonucleoside 5'-diphosphate + phosphate + H(+). The enzyme catalyses ATP + H2O = ADP + phosphate + H(+). It carries out the reaction a 5'-end (5'-triphosphoguanosine)-ribonucleoside in mRNA + S-adenosyl-L-methionine = a 5'-end (N(7)-methyl 5'-triphosphoguanosine)-ribonucleoside in mRNA + S-adenosyl-L-homocysteine. The catalysed reaction is a 5'-end (N(7)-methyl 5'-triphosphoguanosine)-ribonucleoside in mRNA + S-adenosyl-L-methionine = a 5'-end (N(7)-methyl 5'-triphosphoguanosine)-(2'-O-methyl-ribonucleoside) in mRNA + S-adenosyl-L-homocysteine + H(+). Capsid protein self-assembles to form an icosahedral capsid about 40 nm in diameter. Plays a role in virus budding by binding to the cell membrane and gathering the viral RNA into a nucleocapsid that forms the core of a mature virus particle. Functionally, prevents premature fusion activity of envelope proteins in trans-Golgi by binding to envelope protein E at pH6.0. After virion release in extracellular space, gets dissociated from E dimers. Its function is as follows. Acts as a chaperone for envelope protein E during intracellular virion assembly by masking and inactivating envelope protein E fusion peptide. prM is the only viral peptide matured by host furin in the trans-Golgi network probably to avoid catastrophic activation of the viral fusion activity in acidic Golgi compartment prior to virion release. prM-E cleavage is inefficient, and many virions are only partially matured. These uncleaved prM would play a role in immune evasion. In terms of biological role, may play a role in virus budding. Exerts cytotoxic effects by activating a mitochondrial apoptotic pathway through M ectodomain. May display a viroporin activity. Binds to host cell surface receptor and mediates fusion between viral and cellular membranes. Envelope protein is synthesized in the endoplasmic reticulum in the form of heterodimer with protein prM. They play a role in virion budding in the ER, and the newly formed immature particle is covered with 60 spikes composed of heterodimer between precursor prM and envelope protein E. The virion is transported to the Golgi apparatus where the low pH causes dissociation of PrM-E heterodimers and formation of E homodimers. Functionally, involved in immune evasion, pathogenesis and viral replication. Interacts with host MAVS and blocks MAVS binding to RIGI or IFIH1/MDA5, thereby leading to evasion of the innate immune response. Once cleaved off the polyprotein, is targeted to three destinations: the viral replication cycle, the plasma membrane and the extracellular compartment. Essential for viral replication. Required for formation of the replication complex and recruitment of other non-structural proteins to the ER-derived membrane structures. Excreted as a hexameric lipoparticle that plays a role against host immune response. Its function is as follows. Component of the viral RNA replication complex that functions in virion assembly. In terms of biological role, required cofactor for the serine protease function of NS3. May have membrane-destabilizing activity and form viroporins. Displays three enzymatic activities: serine protease, NTPase and RNA helicase. NS3 serine protease, in association with NS2B, performs its autocleavage and cleaves the polyprotein at dibasic sites in the cytoplasm: C-prM, NS2A-NS2B, NS2B-NS3, NS3-NS4A, NS4A-2K and NS4B-NS5. NS3 RNA helicase binds RNA and unwinds dsRNA in the 3' to 5' direction. Functionally, regulates the ATPase activity of the NS3 helicase activity. NS4A allows NS3 helicase to conserve energy during unwinding. Its function is as follows. Functions as a signal peptide for NS4B. In terms of biological role, induces the formation of ER-derived membrane vesicles where the viral replication takes place. Replicates the viral (+) and (-) RNA genome, and performs the capping of genomes in the cytoplasm. NS5 methylates viral RNA cap at guanine N-7 and ribose 2'-O positions. The protein is Genome polyprotein of Anas (ducks).